The chain runs to 265 residues: Putative carbamate hydrolase RutD (265 aa).

In terms of domain architecture, AB hydrolase-1 spans 14 to 123; that stretch reads PTLVLSSGLG…WSSPNPHSAR (110 aa).

Belongs to the AB hydrolase superfamily. Hydrolase RutD family.

The catalysed reaction is carbamate + 2 H(+) = NH4(+) + CO2. Involved in pyrimidine catabolism. May facilitate the hydrolysis of carbamate, a reaction that can also occur spontaneously. This is Putative carbamate hydrolase RutD from Stutzerimonas stutzeri (strain A1501) (Pseudomonas stutzeri).